A 307-amino-acid chain; its full sequence is N-acetylneuraminate lyase (307 aa).

Positions 51 and 52 each coordinate aceneuramate. Y143 (proton donor) is an active-site residue. K173 functions as the Schiff-base intermediate with substrate in the catalytic mechanism. S175, G199, D201, E202, and S218 together coordinate aceneuramate.

It belongs to the DapA family. NanA subfamily. As to quaternary structure, homotetramer.

Its subcellular location is the cytoplasm. The enzyme catalyses aceneuramate = aldehydo-N-acetyl-D-mannosamine + pyruvate. The protein operates within amino-sugar metabolism; N-acetylneuraminate degradation. Catalyzes the cleavage of N-acetylneuraminic acid (sialic acid) to form pyruvate and N-acetylmannosamine via a Schiff base intermediate. It prevents sialic acids from being recycled and returning to the cell surface. Involved in the N-glycolylneuraminic acid (Neu5Gc) degradation pathway. The chain is N-acetylneuraminate lyase from Danio rerio (Zebrafish).